Consider the following 355-residue polypeptide: 6-aminohexanoate-oligomer endohydrolase (355 aa).

The active-site Nucleophile is threonine 267.

It belongs to the peptidase S58 family. As to quaternary structure, heterotetramer composed of 4 alpha/beta heterodimers. Expressed as an inactive precursor that is cleaved autocatalytically at Asn266/Thr267 to generate an active enzyme composed of an alpha subunit and a beta subunit.

The enzyme catalyses [N-(6-aminohexanoyl)]n + H2O = [N-(6-aminohexanoyl)]n-x + [N-(6-aminohexanoyl)]x.. It participates in xenobiotic degradation; nylon-6 oligomer degradation. In terms of biological role, involved in the degradation of nylon-6 oligomers. Degrades cyclic and linear oligomers of 6-aminohexanoate (Ahx) with a degree of polymerization greater than three by an endo-type mode. Cannot use Ahx cyclic dimer or the Ahx linear dimer. The protein is 6-aminohexanoate-oligomer endohydrolase of Agromyces sp. (strain KY5R).